The sequence spans 126 residues: Large ribosomal subunit protein bL12 (126 aa).

It belongs to the bacterial ribosomal protein bL12 family. In terms of assembly, homodimer. Part of the ribosomal stalk of the 50S ribosomal subunit. Forms a multimeric L10(L12)X complex, where L10 forms an elongated spine to which 2 to 4 L12 dimers bind in a sequential fashion. Binds GTP-bound translation factors.

Its function is as follows. Forms part of the ribosomal stalk which helps the ribosome interact with GTP-bound translation factors. Is thus essential for accurate translation. This chain is Large ribosomal subunit protein bL12, found in Bifidobacterium longum (strain DJO10A).